The primary structure comprises 282 residues: V-set domain-containing T-cell activation inhibitor 1 (282 aa).

Residues 1–24 (MASLGQILFWSIISIIIILAGAIA) form the signal peptide. Residues 25 to 259 (LIIGFGISGR…HLQLLNSKAS (235 aa)) lie on the Extracellular side of the membrane. 2 Ig-like V-type domains span residues 35–146 (HSIT…LEYK) and 153–241 (PEVN…IKVT). Disulfide bonds link cysteine 56-cysteine 130 and cysteine 168-cysteine 225. Asparagine 216 carries an N-linked (GlcNAc...) asparagine glycan. Residues 260–280 (LCVSSFFAISWALLPLSPYLM) form a helical membrane-spanning segment. Residues 281–282 (LK) are Cytoplasmic-facing.

It belongs to the immunoglobulin superfamily. BTN/MOG family. Post-translationally, N-glycosylated. Overexpressed in breast, ovarian, endometrial, renal cell (RCC) and non-small-cell lung cancers (NSCLC). Expressed on activated T- and B-cells, monocytes and dendritic cells, but not expressed in most normal tissues (at protein level). Widely expressed, including in kidney, liver, lung, ovary, placenta, spleen and testis.

It is found in the cell membrane. Negatively regulates T-cell-mediated immune response by inhibiting T-cell activation, proliferation, cytokine production and development of cytotoxicity. When expressed on the cell surface of tumor macrophages, plays an important role, together with regulatory T-cells (Treg), in the suppression of tumor-associated antigen-specific T-cell immunity. Involved in promoting epithelial cell transformation. The polypeptide is V-set domain-containing T-cell activation inhibitor 1 (Homo sapiens (Human)).